Consider the following 224-residue polypeptide: LexA repressor (224 aa).

The H-T-H motif DNA-binding region spans 31–51 (RAEIATELGFRSANAAEEHLQ). Active-site for autocatalytic cleavage activity residues include S142 and K179.

The protein belongs to the peptidase S24 family. As to quaternary structure, homodimer.

It catalyses the reaction Hydrolysis of Ala-|-Gly bond in repressor LexA.. Functionally, represses a number of genes involved in the response to DNA damage (SOS response), including recA and lexA. In the presence of single-stranded DNA, RecA interacts with LexA causing an autocatalytic cleavage which disrupts the DNA-binding part of LexA, leading to derepression of the SOS regulon and eventually DNA repair. The protein is LexA repressor of Albidiferax ferrireducens (strain ATCC BAA-621 / DSM 15236 / T118) (Rhodoferax ferrireducens).